A 177-amino-acid polypeptide reads, in one-letter code: Small ribosomal subunit protein uS4 (177 aa).

Residues 104–168 enclose the S4 RNA-binding domain; it reads RRLQTLVFRK…SPMASESHPE (65 aa). Residues 157 to 177 are disordered; it reads PNSPMASESHPERTDSVKDAE. Positions 165-177 are enriched in basic and acidic residues; it reads SHPERTDSVKDAE.

It belongs to the universal ribosomal protein uS4 family. As to quaternary structure, part of the 30S ribosomal subunit. Contacts protein S5. The interaction surface between S4 and S5 is involved in control of translational fidelity.

Functionally, one of the primary rRNA binding proteins, it binds directly to 16S rRNA where it nucleates assembly of the body of the 30S subunit. Its function is as follows. With S5 and S12 plays an important role in translational accuracy. This Methanococcus aeolicus (strain ATCC BAA-1280 / DSM 17508 / OCM 812 / Nankai-3) protein is Small ribosomal subunit protein uS4.